Reading from the N-terminus, the 206-residue chain is MEMDASGASRAPISVLPAAEVKSTLKPEADKPRCSSTPCSPIKSTVSGYQILHMNSNYLVGFTTGEELLKLAQKWSSPDSSNTEALPSPIKKPVDLGLHRASRIYKAKSRYYQPYDIPAVNGRRRRRMPSSGDSCLKSIVSGEPSKALHGPLPLCLLKGKRVYSKSLDYLNLDKMSLREPVDTEVLQYQLQHLNLRGERVFTRNKT.

It belongs to the UNC119-binding protein family. In terms of assembly, interacts with unc119 family proteins; interaction preferentially takes place when unc119 proteins are unliganded with myristoylated proteins.

It localises to the cytoplasm. The protein localises to the cell projection. Its subcellular location is the cilium. May play a role in immune regulation through regulation of the macrophage function. Involved in the recruitment of macrophages in response to injury. May also play a role in trafficking of proteins via its interaction with unc119 family cargo adapters. May play a role in ciliary membrane localization. In terms of biological role, regulates the macrophage function, by enhancing the resolution of inflammation and wound repair functions mediated by M2 macrophages. The regulation of macrophage function is, due at least in part, to the role of C5orf30 in regulating ability to inhibit glycolysis. Probably plays alaso a role in trafficking of proteins via its interaction with UNC119 and UNC119B cargo adapters: may help the release of UNC119 and UNC119B cargo or the recycling of UNC119 and UNC119B. May play a role in ciliary membrane localization via its interaction with UNC119B and protein transport into photoreceptor cells. This chain is Macrophage immunometabolism regulator (macir), found in Danio rerio (Zebrafish).